Consider the following 147-residue polypeptide: Large ribosomal subunit protein uL15 (147 aa).

Over residues 1–15 the composition is skewed to basic and acidic residues; the sequence is MKLHELKPAKGAVKE. The interval 1-47 is disordered; it reads MKLHELKPAKGAVKEVKRKGRGRATGNGKTAGRGHNGQNSRSGGGVR. Residues 23–35 are compositionally biased toward gly residues; it reads RATGNGKTAGRGH.

The protein belongs to the universal ribosomal protein uL15 family. In terms of assembly, part of the 50S ribosomal subunit.

Functionally, binds to the 23S rRNA. The sequence is that of Large ribosomal subunit protein uL15 from Alkaliphilus metalliredigens (strain QYMF).